A 201-amino-acid polypeptide reads, in one-letter code: MGNIILLTGFQPFLDYSINPTEAIVKELNGRKIGEYEVRGVILPVSFRESGDLLLHHFQTVQPTAVFMLGLAAGRGKITPERVAININSGPEDRDGIAPVDEPIRQGGPAAYFSTLPVRRLIQRLNEEGFPAEMSNSAGTYVCNHVMYRMLDYLHEKGSEQVAAGFVHLPASKELAAQHHSLPSMDLKDLTRAVTLMIEEL.

Residues E81, C143, and H168 contribute to the active site.

It belongs to the peptidase C15 family. As to quaternary structure, homotetramer.

It is found in the cytoplasm. It carries out the reaction Release of an N-terminal pyroglutamyl group from a polypeptide, the second amino acid generally not being Pro.. Functionally, removes 5-oxoproline from various penultimate amino acid residues except L-proline. The protein is Pyrrolidone-carboxylate peptidase (pcp) of Halalkalibacterium halodurans (strain ATCC BAA-125 / DSM 18197 / FERM 7344 / JCM 9153 / C-125) (Bacillus halodurans).